Consider the following 286-residue polypeptide: Pyridoxal kinase PdxY (286 aa).

Substrate contacts are provided by residues Ser-9 and 44–45 (TQ). ATP is bound by residues Asp-111, Ala-143, Glu-148, Lys-181, and 208-211 (RPLV). Position 223 (Asp-223) interacts with substrate.

The protein belongs to the pyridoxine kinase family. PdxY subfamily. Homodimer. It depends on Mg(2+) as a cofactor.

It carries out the reaction pyridoxal + ATP = pyridoxal 5'-phosphate + ADP + H(+). The protein operates within cofactor metabolism; pyridoxal 5'-phosphate salvage; pyridoxal 5'-phosphate from pyridoxal: step 1/1. Its function is as follows. Pyridoxal kinase involved in the salvage pathway of pyridoxal 5'-phosphate (PLP). Catalyzes the phosphorylation of pyridoxal to PLP. The polypeptide is Pyridoxal kinase PdxY (Yersinia pseudotuberculosis serotype I (strain IP32953)).